Reading from the N-terminus, the 1509-residue chain is ABC transporter G family member 38 (1509 aa).

The 272-residue stretch at 196–467 folds into the ABC transporter 1 domain; the sequence is LGLVGLNFAK…FERCGFRCPE (272 aa). 229–236 lines the ATP pocket; that stretch reads GPPSSGKT. An ABC transmembrane type-2 1 domain is found at 545-758; the sequence is ELLKTSCSKE…AYIAFSSNEM (214 aa). 7 helical membrane passes run 563–583, 598–618, 651–671, 682–702, 707–727, 733–753, and 791–811; these read FVYIFKTVQGILVALIASTVF, IYIGALIFVMITNMFSGFADL, IPSSLFESIIWVAITYYTMGF, LLVVFMLQQMAAGLFRVTAGL, VVTNTAGSLAVLIMFVLGGFI, IPKWWVWAYWCSPLTYAYIAF, and YWIATGALLGFTILFNVLFSL. One can recognise an ABC transporter 2 domain in the interval 908-1160; sequence MSFNEINYYV…KVVEYFEAIP (253 aa). 953-960 contacts ATP; it reads GVSGAGKT. Positions 1233 to 1447 constitute an ABC transmembrane type-2 2 domain; that stretch reads NQFKLCLWKQ…TVYGLIVSQY (215 aa). 7 consecutive transmembrane segments (helical) span residues 1252 to 1272, 1284 to 1304, 1336 to 1356, 1367 to 1387, 1397 to 1417, 1425 to 1445, and 1478 to 1498; these read YNLVRIFFALFTALMLGTIFW, LLVIIGSMYAAVLFVGFENSV, VVVEIPYVFVETVIYTLIVYP, FFWFFYVSFFTFLYFTYYGMM, VASILGAAFYTLFNLFSGFFI, WWVWYYWLCPVAWTVYGLIVS, and FMGVVAAVLAGFTVFFAFTYA.

The protein belongs to the ABC transporter superfamily. ABCG family. PDR (TC 3.A.1.205) subfamily.

Its subcellular location is the membrane. May be a general defense protein. The polypeptide is ABC transporter G family member 38 (Oryza sativa subsp. japonica (Rice)).